A 90-amino-acid polypeptide reads, in one-letter code: Small ribosomal subunit protein bS16 (90 aa).

Belongs to the bacterial ribosomal protein bS16 family.

The protein is Small ribosomal subunit protein bS16 of Streptococcus gordonii (strain Challis / ATCC 35105 / BCRC 15272 / CH1 / DL1 / V288).